The following is a 440-amino-acid chain: Enolase (440 aa).

Position 163 (Gln-163) interacts with (2R)-2-phosphoglycerate. Glu-205 functions as the Proton donor in the catalytic mechanism. Positions 242, 288, and 315 each coordinate Mg(2+). (2R)-2-phosphoglycerate-binding residues include Lys-340, Arg-369, Ser-370, and Lys-391. Catalysis depends on Lys-340, which acts as the Proton acceptor.

This sequence belongs to the enolase family. The cofactor is Mg(2+).

It localises to the cytoplasm. The protein resides in the secreted. Its subcellular location is the cell surface. It carries out the reaction (2R)-2-phosphoglycerate = phosphoenolpyruvate + H2O. It participates in carbohydrate degradation; glycolysis; pyruvate from D-glyceraldehyde 3-phosphate: step 4/5. In terms of biological role, catalyzes the reversible conversion of 2-phosphoglycerate (2-PG) into phosphoenolpyruvate (PEP). It is essential for the degradation of carbohydrates via glycolysis. The sequence is that of Enolase from Limosilactobacillus fermentum (strain NBRC 3956 / LMG 18251) (Lactobacillus fermentum).